The chain runs to 328 residues: Eukaryotic translation initiation factor 3 subunit I (328 aa).

5 WD repeats span residues 8–47 (GHER…RLGT), 50–91 (GHQG…GTIP), 148–187 (SIQT…ELNS), 190–229 (DHTG…CLKT), and 287–328 (GHFG…FVFE).

This sequence belongs to the eIF-3 subunit I family. Component of the eukaryotic translation initiation factor 3 (eIF-3) complex.

The protein resides in the cytoplasm. Its function is as follows. Component of the eukaryotic translation initiation factor 3 (eIF-3) complex, which is involved in protein synthesis of a specialized repertoire of mRNAs and, together with other initiation factors, stimulates binding of mRNA and methionyl-tRNAi to the 40S ribosome. The eIF-3 complex specifically targets and initiates translation of a subset of mRNAs involved in cell proliferation. In Culex quinquefasciatus (Southern house mosquito), this protein is Eukaryotic translation initiation factor 3 subunit I.